The following is a 566-amino-acid chain: Chromatin assembly factor 1 subunit B (566 aa).

6 WD repeats span residues 11-54 (HNKE…DGKA), 64-103 (RHTKAVNVVRFSPSGEVLASGGDDAVILLWKLNDSKELEP), 127-166 (GHLEDVYDICWTSDGNYMASASVDNTAIMWDVVKGQKVSI), 169-208 (EHKSYVQGITWDPLGQYIATLSCDRVLRVYNTQTKRVAFN), 228-279 (FHDD…RPMG), and 351-392 (IHYH…IPLK). Disordered regions lie at residues 411-481 (KSQP…NQPR) and 501-566 (IPLK…KPNK). 2 stretches are compositionally biased toward polar residues: residues 425–437 (TEGTSLSTPTLQP) and 469–478 (QPASQSTKVN).

This sequence belongs to the WD repeat HIR1 family. In terms of assembly, interacts with CHAF1A.

It localises to the nucleus. Acts as a component of the histone chaperone complex chromatin assembly factor 1 (CAF-1), which assembles histone octamers onto DNA during replication and repair. CAF-1 performs the first step of the nucleosome assembly process, bringing newly synthesized histones H3 and H4 to replicating DNA; histones H2A/H2B can bind to this chromatin precursor subsequent to DNA replication to complete the histone octamer. This is Chromatin assembly factor 1 subunit B (CHAF1B) from Gallus gallus (Chicken).